The following is a 511-amino-acid chain: Dopamine receptor 1 (511 aa).

An N-terminal signal peptide occupies residues 1-19 (MYTPHPFGFLIILVPMTNA). At 20-142 (MRAIAAIAAG…EEPEPLSLVS (123 aa)) the chain is on the extracellular side. N-linked (GlcNAc...) asparagine glycans are attached at residues Asn-53, Asn-63, Asn-74, Asn-117, and Asn-123. Residues 143–169 (IVVVGIFLSVLIFLSVAGNILVCLAIY) traverse the membrane as a helical segment. Residues 170–179 (TERSLRRIGN) are Cytoplasmic-facing. The chain crosses the membrane as a helical span at residues 180–206 (LFLASLAIADLFVASLVMTFAGVNDLL). At 207 to 216 (GYWIFGAQFC) the chain is on the extracellular side. Cys-216 and Cys-302 form a disulfide bridge. A helical membrane pass occupies residues 217–239 (DTWVAFDVMCSTASILNLCAISM). Residues 240–258 (DRYIHIKDPLRYGRWVTRR) are Cytoplasmic-facing. A helical membrane pass occupies residues 259–279 (VAVITIAAIWLLAAFVSFVPI). The Extracellular segment spans residues 280–310 (SLGIHRPDQPLIFEDNGKKYPTCALDLTPTY). A helical transmembrane segment spans residues 311-331 (AVVSSCISFYFPCVVMIGIYC). Residues 332–391 (RLYCYAQKHVKSIKAVTRPGEVAEKQRYKSIRRPKNQPKKFKVRNLHTHSSPYHVSDHKA) are Cytoplasmic-facing. A helical transmembrane segment spans residues 392-412 (AVTVGVIMGVFLICWVPFFCV). At 413–427 (NITAAFCKTCIGGQT) the chain is on the extracellular side. A helical transmembrane segment spans residues 428 to 450 (FKILTWLGYSNSAFNPIIYSIFN). The Cytoplasmic portion of the chain corresponds to 451–511 (KEFRDAFKRI…SAELEQVSAI (61 aa)). Residues Cys-468 and Cys-469 are each lipidated (S-palmitoyl cysteine).

The protein belongs to the G-protein coupled receptor 1 family. Expressed in the larval and adult CNS in structures that mediate higher-order brain functions such as learning, memory and motor control: in the mushroom body neuropil and four unpaired neurons in each thoracic segment. The adult CNS has intense expression in the central complex, moderate expression in several neurosecretory cells, and weak expression in two unpaired neurons in the mesothoracic neuromere. Also seen in the somata of the optic lobes.

It is found in the cell membrane. In terms of biological role, receptor for dopamine. The activity of this receptor is mediated by G proteins which activate adenylyl cyclase. Might be involved in the processing of visual information and/or visual learning. Important for Pavlovian conditioning: required in the mushroom body as a receptor conveying unconditional stimuli information, has a role in memory formation for aversive and appetitive learning. Sleep-deprivation-induced impairments in learning can be partially explained through alterations in dopamine signaling, Dop1R1 expression levels are reduced; sleep may have a role in restoring dopamine homeostasis. The chain is Dopamine receptor 1 (Dop1R1) from Drosophila melanogaster (Fruit fly).